The sequence spans 162 residues: UPF0114 protein PST_0950 (162 aa).

3 helical membrane-spanning segments follow: residues 15–35 (LLAP…IKFF), 53–73 (LVLT…LVMV), and 136–156 (LMWY…MGYM).

This sequence belongs to the UPF0114 family.

The protein resides in the cell membrane. This chain is UPF0114 protein PST_0950, found in Stutzerimonas stutzeri (strain A1501) (Pseudomonas stutzeri).